The sequence spans 219 residues: GTP-binding protein Rab-3D (219 aa).

At Ala-2 the chain carries N-acetylalanine. 29 to 37 (GNSSVGKTS) provides a ligand contact to GDP. Residues Ser-31, Ser-32, Val-33, Gly-34, Lys-35, Thr-36, Ser-37, Pro-49, and Ser-53 each contribute to the GTP site. Thr-36 is a binding site for Mg(2+). The Switch 1 signature appears at 49–58 (PAFVSTVGID). 2 residues coordinate Mg(2+): Thr-54 and Asp-77. Position 80 (Gly-80) interacts with GTP. The Switch 2 signature appears at 80-96 (GQERYRTITTAYYRGAM). Thr-86 carries the phosphothreonine modification. The GTP site is built by Asn-135, Lys-136, Asp-138, Ala-166, and Lys-167. GDP contacts are provided by residues 135–138 (NKCD) and 165–167 (SAK). Ser-190 carries the phosphoserine modification. Residues 190 to 219 (SLEPSSSPGSNGKGPALGDTPPPQPSSCGC) form a disordered region. A compositionally biased stretch (low complexity) spans 193 to 203 (PSSSPGSNGKG). Residues 209 to 219 (TPPPQPSSCGC) are compositionally biased toward pro residues. S-geranylgeranyl cysteine attachment occurs at residues Cys-217 and Cys-219. Cys-219 carries the post-translational modification Cysteine methyl ester; partial.

Belongs to the small GTPase superfamily. Rab family. Interacts with RIMS1, RIMS2, RPH3A and RPH3AL. Interacts with RAB3IP. The GTP-bound form interacts with REP15. Interacts with CHM; phosphorylation at Thr-86 disrupts this interaction. Interacts with MADD (via uDENN domain); the GTP-bound form is preferred for interaction. The cofactor is Mg(2+). In fetal glands the majority of the proteins are methylated, whereas in neonatal and adult glands, only 50% are methylated. In terms of processing, phosphorylation of Thr-86 in the switch II region by LRRK2 prevents the association of RAB regulatory proteins, including CHM. As to expression, highest levels found in lung.

It is found in the cell membrane. The enzyme catalyses GTP + H2O = GDP + phosphate + H(+). With respect to regulation, regulated by guanine nucleotide exchange factors (GEFs) which promote the exchange of bound GDP for free GTP. Regulated by GTPase activating proteins (GAPs) which increase the GTP hydrolysis activity. Inhibited by GDP dissociation inhibitors (GDIs) which prevent Rab-GDP dissociation. Functionally, the small GTPases Rab are key regulators of intracellular membrane trafficking, from the formation of transport vesicles to their fusion with membranes. Rabs cycle between an inactive GDP-bound form and an active GTP-bound form that is able to recruit to membranes different sets of downstream effectors directly responsible for vesicle formation, movement, tethering and fusion. RAB3D may be involved in the insulin-induced exocytosis of GLUT4-containing vesicles in adipocytes. In Rattus norvegicus (Rat), this protein is GTP-binding protein Rab-3D.